The primary structure comprises 476 residues: Acidic leucine-rich nuclear phosphoprotein 32-related protein 1 (476 aa).

3 LRR repeats span residues 51-72, 73-92, and 98-119; these read SLEH…PRLR, NLTR…DHLV, and SLRD…SPLA. The LRRCT domain occupies 131–169; it reads CPVTRVKDYRSKVFGMIRTLKYLDKMDADENERPESDDD. Positions 157 to 476 are disordered; the sequence is DADENERPES…VEDLRPFKHH (320 aa). 8 stretches are compositionally biased toward acidic residues: residues 165–194, 222–232, 252–289, 299–329, 353–371, 379–396, 415–436, and 458–467; these read ESDD…EDPG, DVDEDESDADE, GDED…EDAV, SDEE…EAEP, EGED…EERL, EGND…EDTE, DAAE…DDGG, and GDDDEDDDGV.

This sequence belongs to the ANP32 family.

The sequence is that of Acidic leucine-rich nuclear phosphoprotein 32-related protein 1 from Oryza sativa subsp. japonica (Rice).